Reading from the N-terminus, the 544-residue chain is Chaperonin GroEL (544 aa).

Residues 29-32 (TLGP), 86-90 (DGTTT), glycine 413, 476-478 (NAA), and aspartate 492 contribute to the ATP site.

It belongs to the chaperonin (HSP60) family. In terms of assembly, forms a cylinder of 14 subunits composed of two heptameric rings stacked back-to-back. Interacts with the co-chaperonin GroES.

It is found in the cytoplasm. The enzyme catalyses ATP + H2O + a folded polypeptide = ADP + phosphate + an unfolded polypeptide.. In terms of biological role, together with its co-chaperonin GroES, plays an essential role in assisting protein folding. The GroEL-GroES system forms a nano-cage that allows encapsulation of the non-native substrate proteins and provides a physical environment optimized to promote and accelerate protein folding. The sequence is that of Chaperonin GroEL from Bacillus cereus (strain G9842).